The sequence spans 124 residues: Large ribosomal subunit protein uL18 (124 aa).

Belongs to the universal ribosomal protein uL18 family. In terms of assembly, part of the 50S ribosomal subunit; part of the 5S rRNA/L5/L18/L25 subcomplex. Contacts the 5S and 23S rRNAs.

Functionally, this is one of the proteins that bind and probably mediate the attachment of the 5S RNA into the large ribosomal subunit, where it forms part of the central protuberance. This Aquifex aeolicus (strain VF5) protein is Large ribosomal subunit protein uL18.